A 297-amino-acid polypeptide reads, in one-letter code: UDP-N-acetylenolpyruvoylglucosamine reductase (297 aa).

In terms of domain architecture, FAD-binding PCMH-type spans 18–184; the sequence is QVGGPAEWYL…LSARLRLAPG (167 aa). The active site involves Arg-163. The active-site Proton donor is the Ser-214. Glu-285 is a catalytic residue.

Requires FAD as cofactor.

Its subcellular location is the cytoplasm. It catalyses the reaction UDP-N-acetyl-alpha-D-muramate + NADP(+) = UDP-N-acetyl-3-O-(1-carboxyvinyl)-alpha-D-glucosamine + NADPH + H(+). It functions in the pathway cell wall biogenesis; peptidoglycan biosynthesis. Cell wall formation. The polypeptide is UDP-N-acetylenolpyruvoylglucosamine reductase (Gloeobacter violaceus (strain ATCC 29082 / PCC 7421)).